Here is a 572-residue protein sequence, read N- to C-terminus: Mitochondrial chaperone TCM62 (572 aa).

The N-terminal 16 residues, 1–16 (MLRNCLRKLGNHQTKC), are a transit peptide targeting the mitochondrion. At 17–471 (SVKTLHTPIY…KANEPNFMTK (455 aa)) the chain is on the mitochondrial matrix side. The helical transmembrane segment at 472-488 (VGINAVLSAVILPSEVA) threads the bilayer. At 489-572 (FKNAYGYNYY…VYKKPERHKA (84 aa)) the chain is on the mitochondrial intermembrane side.

This sequence belongs to the chaperonin (HSP60) family. As to quaternary structure, forms a high molecular mass protein complex of approximately 850 kDa.

It localises to the mitochondrion inner membrane. In terms of biological role, chaperone. Required for the assembly of succinate dehydrogenase subunits. Ensures mitochondrial gene expression at elevated temperatures and prevents heat-aggregation of the ribosomal subunit VAR1. The polypeptide is Mitochondrial chaperone TCM62 (TCM62) (Saccharomyces cerevisiae (strain YJM789) (Baker's yeast)).